The following is a 254-amino-acid chain: NAD-dependent protein deacylase 2 (254 aa).

The region spanning 1 to 254 (MDEHSIMQAV…LPALVRRLGV (254 aa)) is the Deacetylase sirtuin-type domain. 24-44 (GAGMSADSGLETYRDPETGVW) serves as a coordination point for NAD(+). Substrate is bound by residues Y69 and R72. 105 to 108 (QNID) is a binding site for NAD(+). Catalysis depends on H123, which acts as the Proton acceptor. Zn(2+)-binding residues include C131, C134, C157, and C160. Residues 197–199 (GTS) and A241 contribute to the NAD(+) site.

This sequence belongs to the sirtuin family. Class III subfamily. Requires Zn(2+) as cofactor.

It is found in the cytoplasm. The enzyme catalyses N(6)-acetyl-L-lysyl-[protein] + NAD(+) + H2O = 2''-O-acetyl-ADP-D-ribose + nicotinamide + L-lysyl-[protein]. The catalysed reaction is N(6)-succinyl-L-lysyl-[protein] + NAD(+) + H2O = 2''-O-succinyl-ADP-D-ribose + nicotinamide + L-lysyl-[protein]. Functionally, NAD-dependent lysine deacetylase and desuccinylase that specifically removes acetyl and succinyl groups on target proteins. Modulates the activities of several proteins which are inactive in their acylated form. The chain is NAD-dependent protein deacylase 2 from Corynebacterium efficiens (strain DSM 44549 / YS-314 / AJ 12310 / JCM 11189 / NBRC 100395).